A 317-amino-acid polypeptide reads, in one-letter code: USG-1 protein homolog (317 aa).

This sequence belongs to the aspartate-semialdehyde dehydrogenase family.

This is USG-1 protein homolog (usg) from Haemophilus influenzae (strain ATCC 51907 / DSM 11121 / KW20 / Rd).